Consider the following 246-residue polypeptide: Probable transcriptional regulatory protein ASA_2843 (246 aa).

The protein belongs to the TACO1 family.

The protein localises to the cytoplasm. In Aeromonas salmonicida (strain A449), this protein is Probable transcriptional regulatory protein ASA_2843.